The primary structure comprises 226 residues: Orotate phosphoribosyltransferase (226 aa).

Residue lysine 30 coordinates 5-phospho-alpha-D-ribose 1-diphosphate. 38–39 (FF) is an orotate binding site. 5-phospho-alpha-D-ribose 1-diphosphate-binding positions include 76–77 (YK), arginine 106, lysine 107, lysine 110, histidine 112, and 132–140 (DDVMTAGTA). Threonine 136 and arginine 164 together coordinate orotate.

The protein belongs to the purine/pyrimidine phosphoribosyltransferase family. PyrE subfamily. In terms of assembly, homodimer.

The catalysed reaction is orotidine 5'-phosphate + diphosphate = orotate + 5-phospho-alpha-D-ribose 1-diphosphate. It participates in pyrimidine metabolism; UMP biosynthesis via de novo pathway; UMP from orotate: step 1/2. Functionally, catalyzes the transfer of a ribosyl phosphate group from 5-phosphoribose 1-diphosphate to orotate, leading to the formation of orotidine monophosphate (OMP). In Kluyveromyces lactis (strain ATCC 8585 / CBS 2359 / DSM 70799 / NBRC 1267 / NRRL Y-1140 / WM37) (Yeast), this protein is Orotate phosphoribosyltransferase (URA5).